We begin with the raw amino-acid sequence, 345 residues long: S-adenosylmethionine:tRNA ribosyltransferase-isomerase (345 aa).

The protein belongs to the QueA family. As to quaternary structure, monomer.

It localises to the cytoplasm. The enzyme catalyses 7-aminomethyl-7-carbaguanosine(34) in tRNA + S-adenosyl-L-methionine = epoxyqueuosine(34) in tRNA + adenine + L-methionine + 2 H(+). It functions in the pathway tRNA modification; tRNA-queuosine biosynthesis. In terms of biological role, transfers and isomerizes the ribose moiety from AdoMet to the 7-aminomethyl group of 7-deazaguanine (preQ1-tRNA) to give epoxyqueuosine (oQ-tRNA). This Acinetobacter baumannii (strain ATCC 17978 / DSM 105126 / CIP 53.77 / LMG 1025 / NCDC KC755 / 5377) protein is S-adenosylmethionine:tRNA ribosyltransferase-isomerase.